A 336-amino-acid polypeptide reads, in one-letter code: Glyceraldehyde-3-phosphate dehydrogenase (336 aa).

Residues 12 to 13 (RI), Asp-35, Arg-79, and Ser-121 contribute to the NAD(+) site. D-glyceraldehyde 3-phosphate-binding positions include 152–154 (SCT) and Thr-183. Residue Cys-153 is the Nucleophile of the active site. Asn-184 contributes to the NAD(+) binding site. Residues Arg-198, 211–212 (TG), and Arg-234 contribute to the D-glyceraldehyde 3-phosphate site. Asn-317 is a binding site for NAD(+).

It belongs to the glyceraldehyde-3-phosphate dehydrogenase family. In terms of assembly, homotetramer.

It is found in the cytoplasm. It carries out the reaction D-glyceraldehyde 3-phosphate + phosphate + NAD(+) = (2R)-3-phospho-glyceroyl phosphate + NADH + H(+). The protein operates within carbohydrate degradation; glycolysis; pyruvate from D-glyceraldehyde 3-phosphate: step 1/5. Resistant to pentalenolactone. In terms of biological role, catalyzes the oxidative phosphorylation of glyceraldehyde 3-phosphate (G3P) to 1,3-bisphosphoglycerate (BPG) using the cofactor NAD. The first reaction step involves the formation of a hemiacetal intermediate between G3P and a cysteine residue, and this hemiacetal intermediate is then oxidized to a thioester, with concomitant reduction of NAD to NADH. The reduced NADH is then exchanged with the second NAD, and the thioester is attacked by a nucleophilic inorganic phosphate to produce BPG. The polypeptide is Glyceraldehyde-3-phosphate dehydrogenase (gap) (Streptomyces coelicolor (strain ATCC BAA-471 / A3(2) / M145)).